The following is a 472-amino-acid chain: Ribosomal protein uS12 methylthiotransferase RimO (472 aa).

An MTTase N-terminal domain is found at 33–143; that stretch reads NRIGFVSLGC…VLKHVHKYVP (111 aa). [4Fe-4S] cluster is bound by residues Cys42, Cys78, Cys107, Cys175, Cys179, and Cys182. The Radical SAM core domain maps to 161 to 398; sequence LTPKHYAYLK…MEVQAEISAE (238 aa). The region spanning 401–467 is the TRAM domain; that stretch reads ARFVGRTLDI…EHDLWAEVVD (67 aa).

The protein belongs to the methylthiotransferase family. RimO subfamily. Requires [4Fe-4S] cluster as cofactor.

The protein resides in the cytoplasm. It catalyses the reaction L-aspartate(89)-[ribosomal protein uS12]-hydrogen + (sulfur carrier)-SH + AH2 + 2 S-adenosyl-L-methionine = 3-methylsulfanyl-L-aspartate(89)-[ribosomal protein uS12]-hydrogen + (sulfur carrier)-H + 5'-deoxyadenosine + L-methionine + A + S-adenosyl-L-homocysteine + 2 H(+). In terms of biological role, catalyzes the methylthiolation of an aspartic acid residue of ribosomal protein uS12. The polypeptide is Ribosomal protein uS12 methylthiotransferase RimO (Shewanella baltica (strain OS195)).